The sequence spans 1035 residues: Protein SEY1 homolog (1035 aa).

Residues D32–S267 form the GB1/RHD3-type G domain. Residue G42–S49 coordinates GTP.

The protein belongs to the TRAFAC class dynamin-like GTPase superfamily. GB1/RHD3 GTPase family. RHD3 subfamily.

It localises to the endoplasmic reticulum membrane. Its function is as follows. Probable GTP-binding protein that may be involved in cell development. This Giardia intestinalis (strain ATCC 50803 / WB clone C6) (Giardia lamblia) protein is Protein SEY1 homolog.